The sequence spans 96 residues: Small ribosomal subunit protein bS6 (96 aa).

The protein belongs to the bacterial ribosomal protein bS6 family.

Binds together with bS18 to 16S ribosomal RNA. The protein is Small ribosomal subunit protein bS6 (rpsF) of Mycobacterium bovis (strain ATCC BAA-935 / AF2122/97).